The primary structure comprises 147 residues: NADH-quinone oxidoreductase subunit A (147 aa).

3 helical membrane passes run phenylalanine 16–phenylalanine 36, phenylalanine 68–tryptophan 88, and valine 98–valine 118.

The protein belongs to the complex I subunit 3 family. NDH-1 is composed of 13 different subunits. Subunits NuoA, H, J, K, L, M, N constitute the membrane sector of the complex.

It localises to the cell inner membrane. The enzyme catalyses a quinone + NADH + 5 H(+)(in) = a quinol + NAD(+) + 4 H(+)(out). Its function is as follows. NDH-1 shuttles electrons from NADH, via FMN and iron-sulfur (Fe-S) centers, to quinones in the respiratory chain. The immediate electron acceptor for the enzyme in this species is believed to be ubiquinone. Couples the redox reaction to proton translocation (for every two electrons transferred, four hydrogen ions are translocated across the cytoplasmic membrane), and thus conserves the redox energy in a proton gradient. This is NADH-quinone oxidoreductase subunit A from Shigella boydii serotype 18 (strain CDC 3083-94 / BS512).